Reading from the N-terminus, the 344-residue chain is Sensor histidine kinase GraS (344 aa).

The next 2 helical transmembrane spans lie at 18-38 (IFWI…DYDI) and 43-63 (IGFI…FTFL). The 207-residue stretch at 126-332 (EFVHDIKTPV…TFVLTFPKQN (207 aa)) folds into the Histidine kinase domain. The residue at position 129 (His129) is a Phosphohistidine; by autocatalysis.

Autophosphorylated.

Its subcellular location is the cell membrane. It catalyses the reaction ATP + protein L-histidine = ADP + protein N-phospho-L-histidine.. Functionally, member of the two-component regulatory system GraR/GraS involved in resistance against cationic antimicrobial peptides (CAMPs). GraS probably functions as a sensor protein kinase which is autophosphorylated at a histidine residue and transfers its phosphate group to GraR. This Staphylococcus haemolyticus (strain JCSC1435) protein is Sensor histidine kinase GraS (graS).